Consider the following 599-residue polypeptide: Bile salt-activated lipase (599 aa).

The N-terminal stretch at 1-20 (MGRLEVLFLGLTCCLAAACA) is a signal peptide. A disulfide bridge connects residues C84 and C100. A glycan (N-linked (GlcNAc...) asparagine) is linked at N207. S214 acts as the Acyl-ester intermediate in catalysis. Residues C266 and C277 are joined by a disulfide bond. A glycan (N-linked (GlcNAc...) asparagine) is linked at N325. Residues D340 and H455 each act as charge relay system in the active site. Residues 553–599 (TGDQDTLTPPEDDSEVAPDPPSDDSQVVPVPPTDDSVEAQMPATIGF) form a disordered region. 3 consecutive repeat copies span residues 559–569 (LTPPEDDSEVA), 570–580 (PDPPSDDSQVV), and 581–588 (PVPPTDDS). Residues 559-588 (LTPPEDDSEVAPDPPSDDSQVVPVPPTDDS) form a 4 X 11 AA tandem repeats, O-glycosylated region region.

It belongs to the type-B carboxylesterase/lipase family. Interacts with CLC. As to expression, EXpressed by eosinophils.

It localises to the secreted. It catalyses the reaction a triacylglycerol + H2O = a diacylglycerol + a fatty acid + H(+). It carries out the reaction 1,2,3-tri-(9Z-octadecenoyl)-glycerol + H2O = di-(9Z)-octadecenoylglycerol + (9Z)-octadecenoate + H(+). The enzyme catalyses 1,2,3-trioctanoylglycerol + H2O = dioctanoylglycerol + octanoate + H(+). The catalysed reaction is a sterol ester + H2O = a sterol + a fatty acid + H(+). It catalyses the reaction an acetyl ester + H2O = an aliphatic alcohol + acetate + H(+). It carries out the reaction a butanoate ester + H2O = an aliphatic alcohol + butanoate + H(+). The enzyme catalyses 9-hexadecanoyloxy-octadecanoate + H2O = 9-hydroxy-octadecanoate + hexadecanoate + H(+). The catalysed reaction is 9-(9Z-octadecenoyloxy)-octadecanoate + H2O = 9-hydroxy-octadecanoate + (9Z)-octadecenoate + H(+). It catalyses the reaction cholesteryl (9Z-octadecenoate) + H2O = cholesterol + (9Z)-octadecenoate + H(+). It carries out the reaction 1-hexadecanoyl-sn-glycero-3-phosphocholine + H2O = sn-glycerol 3-phosphocholine + hexadecanoate + H(+). The enzyme catalyses 12-hexadecanoyloxy-octadecanoate + H2O = 12-hydroxyoctadecanoate + hexadecanoate + H(+). The catalysed reaction is 12-(9Z-octadecenoyloxy)-octadecanoate + H2O = 12-hydroxyoctadecanoate + (9Z)-octadecenoate + H(+). It catalyses the reaction 13-(9Z-octadecenoyloxy)-octadecanoate + H2O = 13-hydroxy-octadecanoate + (9Z)-octadecenoate + H(+). It carries out the reaction 9-(9Z-hexadecenoyloxy)-octadecanoate + H2O = (9Z)-hexadecenoate + 9-hydroxy-octadecanoate + H(+). The enzyme catalyses 12-(9Z-hexadecenoyloxy)-octadecanoate + H2O = 12-hydroxyoctadecanoate + (9Z)-hexadecenoate + H(+). The catalysed reaction is 13-(9Z-hexadecenoyloxy)-octadecanoate + H2O = 13-hydroxy-octadecanoate + (9Z)-hexadecenoate + H(+). It catalyses the reaction 12-octadecanoyloxy-octadecanoate + H2O = 12-hydroxyoctadecanoate + octadecanoate + H(+). It carries out the reaction 13-octadecanoyloxy-octadecanoate + H2O = 13-hydroxy-octadecanoate + octadecanoate + H(+). The enzyme catalyses 5-(9Z-hexadecenoyloxy)-octadecanoate + H2O = 5-hydroxy-octadecanoate + (9Z)-hexadecenoate + H(+). The catalysed reaction is 9-octadecanoyloxy-octadecanoate + H2O = 9-hydroxy-octadecanoate + octadecanoate + H(+). Activated by bile salts such as sodium taurocholate. Functionally, catalyzes the hydrolysis of a wide range of substrates including cholesteryl esters, phospholipids, lysophospholipids, di- and tri-acylglycerols, and fatty acid esters of hydroxy fatty acids (FAHFAs). Preferentially hydrolyzes FAHFAs with the ester bond further away from the carboxylate. Unsaturated FAHFAs are hydrolyzed more quickly than saturated FAHFAs. Has an essential role in the complete digestion of dietary lipids and their intestinal absorption, along with the absorption of fat-soluble vitamins. This Mus musculus (Mouse) protein is Bile salt-activated lipase (Cel).